The following is a 246-amino-acid chain: TATA-box-binding protein (246 aa).

The tract at residues 1–27 is disordered; the sequence is MSSDKTSQQTFKLAPNNSVAQSNSIDQ. 2 tandem repeats follow at residues 53–129 and 143–220.

It belongs to the TBP family. In terms of assembly, belongs to the TFIID complex together with the TBP-associated factors (TAFs). Binds DNA as monomer.

The protein resides in the nucleus. Functionally, general transcription factor that functions at the core of the DNA-binding multiprotein factor TFIID. Binding of TFIID to the TATA box is the initial transcriptional step of the pre-initiation complex (PIC), playing a role in the activation of eukaryotic genes transcribed by RNA polymerase II. This chain is TATA-box-binding protein, found in Tetrahymena thermophila.